Consider the following 139-residue polypeptide: NADPH-dependent 7-cyano-7-deazaguanine reductase (139 aa).

Catalysis depends on cysteine 34, which acts as the Thioimide intermediate. Aspartate 41 acts as the Proton donor in catalysis. Substrate is bound by residues 56–58 (IEL) and 75–76 (HE).

Belongs to the GTP cyclohydrolase I family. QueF type 1 subfamily.

It is found in the cytoplasm. It carries out the reaction 7-aminomethyl-7-carbaguanine + 2 NADP(+) = 7-cyano-7-deazaguanine + 2 NADPH + 3 H(+). It functions in the pathway tRNA modification; tRNA-queuosine biosynthesis. Catalyzes the NADPH-dependent reduction of 7-cyano-7-deazaguanine (preQ0) to 7-aminomethyl-7-deazaguanine (preQ1). This Nitrosomonas eutropha (strain DSM 101675 / C91 / Nm57) protein is NADPH-dependent 7-cyano-7-deazaguanine reductase.